The sequence spans 395 residues: Elongation factor Tu (395 aa).

A tr-type G domain is found at 10–204 (KEHANIGTIG…AVDDFIPTPE (195 aa)). Residues 19–26 (GHVDHGKT) are G1. Residue 19–26 (GHVDHGKT) participates in GTP binding. A Mg(2+)-binding site is contributed by T26. Residues 60–64 (GITIN) are G2. Residues 81 to 84 (DCPG) form a G3 region. GTP contacts are provided by residues 81-85 (DCPGH) and 136-139 (NKVD). The tract at residues 136 to 139 (NKVD) is G4. Positions 174 to 176 (SAL) are G5.

It belongs to the TRAFAC class translation factor GTPase superfamily. Classic translation factor GTPase family. EF-Tu/EF-1A subfamily. In terms of assembly, monomer.

It localises to the cytoplasm. The enzyme catalyses GTP + H2O = GDP + phosphate + H(+). Its function is as follows. GTP hydrolase that promotes the GTP-dependent binding of aminoacyl-tRNA to the A-site of ribosomes during protein biosynthesis. This chain is Elongation factor Tu, found in Staphylococcus saprophyticus subsp. saprophyticus (strain ATCC 15305 / DSM 20229 / NCIMB 8711 / NCTC 7292 / S-41).